The sequence spans 425 residues: Serine--tRNA ligase (425 aa).

231 to 233 (TAE) lines the L-serine pocket. ATP is bound at residue 262-264 (RSE). Residue Glu-285 coordinates L-serine. 349-352 (EISS) lines the ATP pocket. Residue Ser-385 coordinates L-serine.

The protein belongs to the class-II aminoacyl-tRNA synthetase family. Type-1 seryl-tRNA synthetase subfamily. In terms of assembly, homodimer. The tRNA molecule binds across the dimer.

It is found in the cytoplasm. The enzyme catalyses tRNA(Ser) + L-serine + ATP = L-seryl-tRNA(Ser) + AMP + diphosphate + H(+). The catalysed reaction is tRNA(Sec) + L-serine + ATP = L-seryl-tRNA(Sec) + AMP + diphosphate + H(+). It functions in the pathway aminoacyl-tRNA biosynthesis; selenocysteinyl-tRNA(Sec) biosynthesis; L-seryl-tRNA(Sec) from L-serine and tRNA(Sec): step 1/1. In terms of biological role, catalyzes the attachment of serine to tRNA(Ser). Is also able to aminoacylate tRNA(Sec) with serine, to form the misacylated tRNA L-seryl-tRNA(Sec), which will be further converted into selenocysteinyl-tRNA(Sec). This is Serine--tRNA ligase from Bacillus velezensis (strain DSM 23117 / BGSC 10A6 / LMG 26770 / FZB42) (Bacillus amyloliquefaciens subsp. plantarum).